The primary structure comprises 130 residues: Large ribosomal subunit protein bL17 (130 aa).

It belongs to the bacterial ribosomal protein bL17 family. In terms of assembly, part of the 50S ribosomal subunit. Contacts protein L32.

The chain is Large ribosomal subunit protein bL17 from Pectobacterium atrosepticum (strain SCRI 1043 / ATCC BAA-672) (Erwinia carotovora subsp. atroseptica).